Reading from the N-terminus, the 293-residue chain is Membrane protein RL13 (293 aa).

The signal sequence occupies residues 1–19; it reads MHWHLAITWTVIILTFSEC. A helical membrane pass occupies residues 245-265; that stretch reads IPLGIHAVWAGIVVSVALIAL.

The protein localises to the virion membrane. In terms of biological role, may play a role in modifying tropism or in modulating cell signaling during virus entry. Since RL13 expression severely impairs HCMV replication in epithelial cell cultures, it may act as a regulator promoting persistence by suppressing the switch to fully lytic infection. This chain is Membrane protein RL13 (RL13), found in Human cytomegalovirus (strain Merlin) (HHV-5).